Consider the following 47-residue polypeptide: Defensin-2 (47 aa).

4 disulfides stabilise this stretch: cysteine 3–cysteine 47, cysteine 14–cysteine 35, cysteine 20–cysteine 41, and cysteine 24–cysteine 43.

It belongs to the DEFL family. In terms of tissue distribution, epidermis and vascular bundles of pods, stems, roots, leaves and wet or dry seeds.

Its function is as follows. Possesses antifungal activity sensitive to inorganic cations. The polypeptide is Defensin-2 (Pisum sativum (Garden pea)).